A 112-amino-acid polypeptide reads, in one-letter code: T cell receptor alpha variable 30 (112 aa).

The N-terminal stretch at 1–21 (METLLKVLSGTLLWQLTWVRS) is a signal peptide. Residues 24-112 (PVQSPQAVIL…YSGTYFCGTE (89 aa)) form the Ig-like domain. An N-linked (GlcNAc...) asparagine glycan is attached at Asn-42. Cys-43 and Cys-109 are oxidised to a cystine.

As to quaternary structure, alpha-beta TR is a heterodimer composed of an alpha and beta chain; disulfide-linked. The alpha-beta TR is associated with the transmembrane signaling CD3 coreceptor proteins to form the TR-CD3 (TcR or TCR). The assembly of alpha-beta TR heterodimers with CD3 occurs in the endoplasmic reticulum where a single alpha-beta TR heterodimer associates with one CD3D-CD3E heterodimer, one CD3G-CD3E heterodimer and one CD247 homodimer forming a stable octameric structure. CD3D-CD3E and CD3G-CD3E heterodimers preferentially associate with TR alpha and TR beta chains, respectively. The association of the CD247 homodimer is the last step of TcR assembly in the endoplasmic reticulum and is required for transport to the cell surface.

The protein localises to the cell membrane. In terms of biological role, v region of the variable domain of T cell receptor (TR) alpha chain that participates in the antigen recognition. Alpha-beta T cell receptors are antigen specific receptors which are essential to the immune response and are present on the cell surface of T lymphocytes. Recognize peptide-major histocompatibility (MH) (pMH) complexes that are displayed by antigen presenting cells (APC), a prerequisite for efficient T cell adaptive immunity against pathogens. Binding of alpha-beta TR to pMH complex initiates TR-CD3 clustering on the cell surface and intracellular activation of LCK that phosphorylates the ITAM motifs of CD3G, CD3D, CD3E and CD247 enabling the recruitment of ZAP70. In turn ZAP70 phosphorylates LAT, which recruits numerous signaling molecules to form the LAT signalosome. The LAT signalosome propagates signal branching to three major signaling pathways, the calcium, the mitogen-activated protein kinase (MAPK) kinase and the nuclear factor NF-kappa-B (NF-kB) pathways, leading to the mobilization of transcription factors that are critical for gene expression and essential for T cell growth and differentiation. The T cell repertoire is generated in the thymus, by V-(D)-J rearrangement. This repertoire is then shaped by intrathymic selection events to generate a peripheral T cell pool of self-MH restricted, non-autoaggressive T cells. Post-thymic interaction of alpha-beta TR with the pMH complexes shapes TR structural and functional avidity. This chain is T cell receptor alpha variable 30, found in Homo sapiens (Human).